The primary structure comprises 437 residues: Xylose isomerase (437 aa).

Residues histidine 101 and aspartate 104 contribute to the active site. Positions 232, 268, 271, 296, 307, 309, and 339 each coordinate Mg(2+).

Belongs to the xylose isomerase family. As to quaternary structure, homotetramer. It depends on Mg(2+) as a cofactor.

The protein localises to the cytoplasm. It carries out the reaction alpha-D-xylose = alpha-D-xylulofuranose. In Actinobacillus succinogenes (strain ATCC 55618 / DSM 22257 / CCUG 43843 / 130Z), this protein is Xylose isomerase.